Reading from the N-terminus, the 633-residue chain is 1-deoxy-D-xylulose-5-phosphate synthase (633 aa).

Thiamine diphosphate is bound by residues His-74 and 115–117; that span reads GHA. Asp-146 is a binding site for Mg(2+). Residues 147–148, Asn-175, Tyr-286, and Glu-363 each bind thiamine diphosphate; that span reads GA. Asn-175 is a Mg(2+) binding site.

The protein belongs to the transketolase family. DXPS subfamily. As to quaternary structure, homodimer. It depends on Mg(2+) as a cofactor. Thiamine diphosphate serves as cofactor.

It carries out the reaction D-glyceraldehyde 3-phosphate + pyruvate + H(+) = 1-deoxy-D-xylulose 5-phosphate + CO2. It functions in the pathway metabolic intermediate biosynthesis; 1-deoxy-D-xylulose 5-phosphate biosynthesis; 1-deoxy-D-xylulose 5-phosphate from D-glyceraldehyde 3-phosphate and pyruvate: step 1/1. In terms of biological role, catalyzes the acyloin condensation reaction between C atoms 2 and 3 of pyruvate and glyceraldehyde 3-phosphate to yield 1-deoxy-D-xylulose-5-phosphate (DXP). The chain is 1-deoxy-D-xylulose-5-phosphate synthase from Dehalococcoides mccartyi (strain ATCC BAA-2100 / JCM 16839 / KCTC 5957 / BAV1).